The following is a 141-amino-acid chain: Large ribosomal subunit protein uL11 (141 aa).

Belongs to the universal ribosomal protein uL11 family. In terms of assembly, part of the ribosomal stalk of the 50S ribosomal subunit. Interacts with L10 and the large rRNA to form the base of the stalk. L10 forms an elongated spine to which L12 dimers bind in a sequential fashion forming a multimeric L10(L12)X complex. One or more lysine residues are methylated.

Forms part of the ribosomal stalk which helps the ribosome interact with GTP-bound translation factors. The chain is Large ribosomal subunit protein uL11 from Alkaliphilus oremlandii (strain OhILAs) (Clostridium oremlandii (strain OhILAs)).